The chain runs to 158 residues: NAD(P)H-quinone oxidoreductase subunit N (158 aa).

The protein belongs to the complex I NdhN subunit family. NDH-1 can be composed of about 15 different subunits; different subcomplexes with different compositions have been identified which probably have different functions.

Its subcellular location is the cellular thylakoid membrane. The catalysed reaction is a plastoquinone + NADH + (n+1) H(+)(in) = a plastoquinol + NAD(+) + n H(+)(out). It carries out the reaction a plastoquinone + NADPH + (n+1) H(+)(in) = a plastoquinol + NADP(+) + n H(+)(out). In terms of biological role, NDH-1 shuttles electrons from an unknown electron donor, via FMN and iron-sulfur (Fe-S) centers, to quinones in the respiratory and/or the photosynthetic chain. The immediate electron acceptor for the enzyme in this species is believed to be plastoquinone. Couples the redox reaction to proton translocation, and thus conserves the redox energy in a proton gradient. Cyanobacterial NDH-1 also plays a role in inorganic carbon-concentration. This Microcystis aeruginosa (strain NIES-843 / IAM M-2473) protein is NAD(P)H-quinone oxidoreductase subunit N.